Here is a 436-residue protein sequence, read N- to C-terminus: ATP-dependent RNA helicase RhlB (436 aa).

Residues 9-37 carry the Q motif motif; that stretch reads QKFADLDLLPQVIEGLEKKGFDYCTPIQA. In terms of domain architecture, Helicase ATP-binding spans 40–219; sequence LPVLLTGQDI…FEHMHNPEHV (180 aa). Position 53–60 (53–60) interacts with ATP; the sequence is AQTGTGKT. Positions 165 to 168 match the DEAD box motif; it reads DEAD. The region spanning 245-390 is the Helicase C-terminal domain; the sequence is ALLQTLIEEE…MSDYDASALL (146 aa). Residues 398–436 form a disordered region; it reads RLRTRNPQQRRSNNNGPRNGNRKPNQNRRPRQPRHNKEA. Residues 402 to 421 are compositionally biased toward low complexity; sequence RNPQQRRSNNNGPRNGNRKP. The segment covering 422–436 has biased composition (basic residues); it reads NQNRRPRQPRHNKEA.

The protein belongs to the DEAD box helicase family. RhlB subfamily. As to quaternary structure, component of the RNA degradosome, which is a multiprotein complex involved in RNA processing and mRNA degradation.

It is found in the cytoplasm. It catalyses the reaction ATP + H2O = ADP + phosphate + H(+). In terms of biological role, DEAD-box RNA helicase involved in RNA degradation. Has RNA-dependent ATPase activity and unwinds double-stranded RNA. The sequence is that of ATP-dependent RNA helicase RhlB from Vibrio atlanticus (strain LGP32) (Vibrio splendidus (strain Mel32)).